Reading from the N-terminus, the 843-residue chain is Protein P (843 aa).

Residues 1-177 (MPLSYPHFRK…FCGSPYSWEQ (177 aa)) form a terminal protein domain (TP) region. The interval 178 to 346 (ELQHGSTSIN…YCLSHIINLL (169 aa)) is spacer. Disordered regions lie at residues 202–221 (SGIL…FQQS) and 285–310 (TNPS…VPPG). Positions 347-690 (EDWGPCYEHG…YMNLYPVARQ (344 aa)) are polymerase/reverse transcriptase domain (RT). The region spanning 357–600 (QHHIRTPRTP…YTLNFMGYVI (244 aa)) is the Reverse transcriptase domain. Positions 429, 551, and 552 each coordinate Mg(2+).

This sequence belongs to the hepadnaviridae P protein family.

It carries out the reaction DNA(n) + a 2'-deoxyribonucleoside 5'-triphosphate = DNA(n+1) + diphosphate. The enzyme catalyses Endonucleolytic cleavage to 5'-phosphomonoester.. With respect to regulation, activated by host HSP70 and HSP40 in vitro to be able to bind the epsilon loop of the pgRNA. Because deletion of the RNase H region renders the protein partly chaperone-independent, the chaperones may be needed indirectly to relieve occlusion of the RNA-binding site by this domain. Inhibited by several reverse-transcriptase inhibitors: Lamivudine, Adefovir and Entecavir. Functionally, multifunctional enzyme that converts the viral RNA genome into dsDNA in viral cytoplasmic capsids. This enzyme displays a DNA polymerase activity that can copy either DNA or RNA templates, and a ribonuclease H (RNase H) activity that cleaves the RNA strand of RNA-DNA heteroduplexes in a partially processive 3'- to 5'-endonucleasic mode. Neo-synthesized pregenomic RNA (pgRNA) are encapsidated together with the P protein, and reverse-transcribed inside the nucleocapsid. Initiation of reverse-transcription occurs first by binding the epsilon loop on the pgRNA genome, and is initiated by protein priming, thereby the 5'-end of (-)DNA is covalently linked to P protein. Partial (+)DNA is synthesized from the (-)DNA template and generates the relaxed circular DNA (RC-DNA) genome. After budding and infection, the RC-DNA migrates in the nucleus, and is converted into a plasmid-like covalently closed circular DNA (cccDNA). The activity of P protein does not seem to be necessary for cccDNA generation, and is presumably released from (+)DNA by host nuclear DNA repair machinery. The chain is Protein P from Hepatitis B virus genotype F1 (isolate Argentina/sa11/2000) (HBV-F).